Consider the following 479-residue polypeptide: RAC-gamma serine/threonine-protein kinase (479 aa).

At Ser2 the chain carries N-acetylserine. A PH domain is found at 5–107 (TIVKEGWVQK…WTEAIQAVAD (103 aa)). Residues Cys59 and Cys76 are joined by a disulfide bond. Positions 148-405 (FDYLKLLGKG…AKEIMRHSFF (258 aa)) constitute a Protein kinase domain. ATP-binding positions include 154 to 162 (LGKGTFGKV) and Lys177. The active-site Proton acceptor is Asp271. An intrachain disulfide couples Cys293 to Cys307. An O-linked (GlcNAc) threonine glycan is attached at Thr302. Residue Thr305 is modified to Phosphothreonine; by PDPK1. O-linked (GlcNAc) threonine glycosylation occurs at Thr309. Positions 406 to 479 (SGVNWQDVYD…QFSYSASGRE (74 aa)) constitute an AGC-kinase C-terminal domain. Residues 445 to 479 (TITPPEKYDDDGMDGMDNERRPHFPQFSYSASGRE) form a disordered region. Thr447 carries the phosphothreonine modification. Ser472 carries the phosphoserine; by PKC/PRKCZ modification. O-linked (GlcNAc) serine; alternate glycosylation is present at Ser472.

Belongs to the protein kinase superfamily. AGC Ser/Thr protein kinase family. RAC subfamily. Interacts (via PH domain) with TCL1A; this enhances AKT3 phosphorylation and activation. Interacts with TRAF6. Interacts with KCTD20. Interacts with BTBD10. Phosphorylation on Thr-305 and Ser-472 is required for full activity. Phosphorylation of the activation loop at Thr-305 by PDPK1/PDK1 is a prerequisite for full activation. Phosphorylation at Ser-472 by mTORC2 in response to growth factors plays a key role in AKT1 activation by facilitating subsequent phosphorylation of the activation loop by PDPK1/PDK1. In terms of processing, ubiquitinated. When fully phosphorylated and translocated into the nucleus, undergoes 'Lys-48'-polyubiquitination catalyzed by TTC3, leading to its degradation by the proteasome. Post-translationally, O-GlcNAcylation at Thr-302 and Thr-309 inhibits activating phosphorylation at Thr-305 via disrupting the interaction between AKT and PDPK1/PDK1. Isoform 1 is expressed in prostate, testis, uterus and mammary gland and isoform 2 is expressed in prostate, testis and mammary gland.

Its subcellular location is the nucleus. It localises to the cytoplasm. It is found in the membrane. The enzyme catalyses L-seryl-[protein] + ATP = O-phospho-L-seryl-[protein] + ADP + H(+). It catalyses the reaction L-threonyl-[protein] + ATP = O-phospho-L-threonyl-[protein] + ADP + H(+). Two specific sites, one in the kinase domain (Thr-305) and the other in the C-terminal regulatory region (Ser-472), need to be phosphorylated for its full activation. IGF-1 leads to the activation of AKT3, which may play a role in regulating cell survival. Its function is as follows. AKT3 is one of 3 closely related serine/threonine-protein kinases (AKT1, AKT2 and AKT3) called the AKT kinase, and which regulate many processes including metabolism, proliferation, cell survival, growth and angiogenesis. This is mediated through serine and/or threonine phosphorylation of a range of downstream substrates. Over 100 substrate candidates have been reported so far, but for most of them, no isoform specificity has been reported. AKT3 is the least studied AKT isoform. It plays an important role in brain development and is crucial for the viability of malignant glioma cells. AKT3 isoform may also be the key molecule in up-regulation and down-regulation of MMP13 via IL13. Required for the coordination of mitochondrial biogenesis with growth factor-induced increases in cellular energy demands. Down-regulation by RNA interference reduces the expression of the phosphorylated form of BAD, resulting in the induction of caspase-dependent apoptosis. The protein is RAC-gamma serine/threonine-protein kinase (Akt3) of Mus musculus (Mouse).